Reading from the N-terminus, the 893-residue chain is UPF0182 protein CLM_0018 (893 aa).

7 helical membrane-spanning segments follow: residues 9–29 (IPLF…NFII), 49–69 (AIII…WMYY), 94–114 (LFFI…SSSY), 154–174 (VIIS…FILE), 202–222 (LAIV…IKIW), 246–266 (FYKI…LSIV), and 273–293 (VSVC…ASFL).

This sequence belongs to the UPF0182 family.

The protein resides in the cell membrane. In Clostridium botulinum (strain Kyoto / Type A2), this protein is UPF0182 protein CLM_0018.